A 435-amino-acid chain; its full sequence is Serine/threonine-protein kinase 40 (435 aa).

The span at 1–10 (MKRRASDRGA) shows a compositional bias: basic and acidic residues. Positions 1 to 25 (MKRRASDRGAGETSARAKALGSGIS) are disordered. Positions 35–332 (FILGPRLGNS…DVLEALSAII (298 aa)) constitute a Protein kinase domain. Residues 41–49 (LGNSPVPSI) and Lys66 contribute to the ATP site. Asp197 serves as the catalytic Proton acceptor.

It belongs to the protein kinase superfamily. CAMK Ser/Thr protein kinase family.

The protein localises to the nucleus. Its subcellular location is the cytoplasm. The catalysed reaction is L-seryl-[protein] + ATP = O-phospho-L-seryl-[protein] + ADP + H(+). It catalyses the reaction L-threonyl-[protein] + ATP = O-phospho-L-threonyl-[protein] + ADP + H(+). Functionally, may be a negative regulator of NF-kappa-B and p53-mediated gene transcription. In Pongo abelii (Sumatran orangutan), this protein is Serine/threonine-protein kinase 40 (STK40).